Reading from the N-terminus, the 352-residue chain is Ion-translocating oxidoreductase complex subunit D (352 aa).

The next 5 helical transmembrane spans lie at 20 to 40 (IMLL…WFFG), 42 to 62 (GTLV…ALVL), 78 to 109 (ALLT…VIIA), 123 to 143 (PAMI…TSWL), and 148 to 168 (IAVN…GHTA). Thr187 carries the FMN phosphoryl threonine modification. Transmembrane regions (helical) follow at residues 214–234 (ILAG…GLWL), 242–262 (WHIP…GWLF), 267–287 (LAAP…FFIL), 301–321 (LIFG…GGYP), and 322–342 (DGVA…DYYT).

This sequence belongs to the NqrB/RnfD family. As to quaternary structure, the complex is composed of six subunits: RsxA, RsxB, RsxC, RsxD, RsxE and RsxG. FMN serves as cofactor.

The protein localises to the cell inner membrane. Part of a membrane-bound complex that couples electron transfer with translocation of ions across the membrane. Required to maintain the reduced state of SoxR. This chain is Ion-translocating oxidoreductase complex subunit D, found in Escherichia coli (strain SE11).